The chain runs to 212 residues: Glutathione S-transferase hmp2 (212 aa).

One can recognise a GST N-terminal domain in the interval 1–80 (MVIKLYGSAM…YLARKYDSGT (80 aa)). Glutathione is bound by residues 51–52 (KV) and 64–65 (ES). The GST C-terminal domain maps to 88-212 (DHEAYGRFEQ…TWIKATAEAR (125 aa)).

It belongs to the GST superfamily.

It carries out the reaction RX + glutathione = an S-substituted glutathione + a halide anion + H(+). The protein operates within secondary metabolite biosynthesis. Glutathione S-transferase; part of the gene cluster that mediates the biosynthesis of hypothemycin, a resorcylic acid lactone (RAL) that irreversibly inhibits a subset of protein kinases with a conserved cysteine in the ATP binding site such as human ERK2. The first step is performed by both PKSs hmp3 and hmp8 and leads to the production of 7',8'-dehydrozearalenol (DHZ). The highly reducing PKS hpm8 synthesizes the reduced hexaketide (7S,11S,2E,8E)-7,11-dihydroxy-dodeca-2,8-dienoate, which is transferred downstream to the non-reducing PKS hpm3. Hpm3 then extends the reduced hexaketide to a nonaketide, after which regioselective cyclization and macrolactonization affords DHZ. The next step is the conversion of DHZ into aigialomycin C and is performed by the O-methyltransferase hmp5, the FAD-binding monooxygenase hmp7, and the cytochrome P450 monooxygenase hmp1. The wide substrate tolerance of the hmp5 and hmp7 implies that the reactions from DHZ to aigialomycin C can occur in any order. The steps from aigialomycin C to hypothemycin are less well established. The FAD-linked oxidoreductase hmp9 presumably catalyzes oxidation of the C-6' hydroxyl to a ketone. The timing of this oxidation is important, since the resulting enone functional group is a Michael acceptor that can react spontaneously with glutathione, an abundant metabolite in fungal cells. The glutathione S-transferase hmp2 catalyzes cis-trans isomerization of the 7',8' double bond with equilibrium favoring the trans isomer. The hpm6-encoded transporter might preferentially pump hypothemycin out of the cell relative to the trans isomer aigialomycin A. The cis-to-trans isomerization may be coupled with C-4' hydroxylation, since all known hypothemycin analogs containing the enone functional group also have hydroxyl groups at both C-4' and C-5'. This is Glutathione S-transferase hmp2 from Hypomyces subiculosus (Nectria subiculosa).